Consider the following 214-residue polypeptide: Octanoyltransferase (214 aa).

The 183-residue stretch at 28–210 (GTAEDALYLL…EFGKVFTDTA (183 aa)) folds into the BPL/LPL catalytic domain. Substrate is bound by residues 73-80 (RGGNITCH), 140-142 (SIG), and 153-155 (GLS). Residue Cys171 is the Acyl-thioester intermediate of the active site.

Belongs to the LipB family.

Its subcellular location is the cytoplasm. It catalyses the reaction octanoyl-[ACP] + L-lysyl-[protein] = N(6)-octanoyl-L-lysyl-[protein] + holo-[ACP] + H(+). It participates in protein modification; protein lipoylation via endogenous pathway; protein N(6)-(lipoyl)lysine from octanoyl-[acyl-carrier-protein]: step 1/2. Its function is as follows. Catalyzes the transfer of endogenously produced octanoic acid from octanoyl-acyl-carrier-protein onto the lipoyl domains of lipoate-dependent enzymes. Lipoyl-ACP can also act as a substrate although octanoyl-ACP is likely to be the physiological substrate. The protein is Octanoyltransferase of Maridesulfovibrio salexigens (strain ATCC 14822 / DSM 2638 / NCIMB 8403 / VKM B-1763) (Desulfovibrio salexigens).